Reading from the N-terminus, the 365-residue chain is PHD finger protein 6 (365 aa).

Ser-2 bears the N-acetylserine mark. 2 consecutive short sequence motifs (nuclear localization signal) follow at residues 13–16 (RQRK) and 129–133 (RKHKK). The segment at 14-52 (QRKCGFCKSNRDKECGQLLISENQKVAAHHKCMLFSSAL) adopts a C2HC pre-PHD-type 1 zinc-finger fold. The interval 14–132 (QRKCGFCKSN…IYMVYCRKHK (119 aa)) is extended PHD1 domain (ePHD1). The segment at 80–132 (LMCSLCHCPGATIGCDVKTCHRTYHYHCALHDKAQIREKPSQGIYMVYCRKHK) adopts a PHD-type 1 zinc-finger fold. 3 positions are modified to phosphoserine: Ser-138, Ser-145, and Ser-155. Residues 139-211 (EADLEESFNE…RSSPSDTRPK (73 aa)) are disordered. The short motif at 157-169 (KSKKKSRKGRPRK) is the Nucleolar localization signal element. Residues 157 to 171 (KSKKKSRKGRPRKTN) are compositionally biased toward basic residues. Lys-173 participates in a covalent cross-link: Glycyl lysine isopeptide (Lys-Gly) (interchain with G-Cter in SUMO2). Ser-183 and Ser-199 each carry phosphoserine. The C2HC pre-PHD-type 2 zinc-finger motif lies at 209-249 (RPKCGFCHVGEEENEARGKLHIFNAKKAAAHYKCMLFSSGT). An extended PHD2 domain (ePHD2) region spans residues 209–330 (RPKCGFCHVG…IYKLYCKNHS (122 aa)). Residue Lys-227 forms a Glycyl lysine isopeptide (Lys-Gly) (interchain with G-Cter in SUMO2) linkage. The PHD-type 2 zinc-finger motif lies at 278-330 (MKCTLCSQPGATIGCEIKACVKTYHYHCGVQDKAKYIENMSRGIYKLYCKNHS). Residues 330–365 (SGNDERDEEDEERESKSRGKVEIDQQQLTQQQLNGN) form a disordered region. Over residues 342 to 352 (RESKSRGKVEI) the composition is skewed to basic and acidic residues. The span at 354–365 (QQQLTQQQLNGN) shows a compositional bias: low complexity. Phosphothreonine is present on Thr-358.

In terms of assembly, interacts with UBTF. Interacts with the NuRD complex component RBBP4 (via the nucleolar localization motif), the interaction mediates transcriptional repression activity.

The protein localises to the nucleus. It is found in the nucleolus. The protein resides in the chromosome. Its subcellular location is the centromere. It localises to the kinetochore. Its function is as follows. Transcriptional regulator that associates with ribosomal RNA promoters and suppresses ribosomal RNA (rRNA) transcription. In Pongo abelii (Sumatran orangutan), this protein is PHD finger protein 6 (PHF6).